The primary structure comprises 93 residues: Small ribosomal subunit protein bS18 (93 aa).

This sequence belongs to the bacterial ribosomal protein bS18 family. Part of the 30S ribosomal subunit. Forms a tight heterodimer with protein bS6.

Its function is as follows. Binds as a heterodimer with protein bS6 to the central domain of the 16S rRNA, where it helps stabilize the platform of the 30S subunit. This is Small ribosomal subunit protein bS18 from Variovorax paradoxus (strain S110).